The following is a 471-amino-acid chain: MKMPLNIGLVHFIGIGGIGMSGIAEVLHNLGYKVQGSDQSDSANVQRLREKGIEVFVGHKAENLGDAEVIVVSTAIKKNNPELVAAREKLLPVVRRAEMLAELMRFRRAVAIGGTHGKTTTTSLVAALLDAGHLDPTVINGGIINAYGTNARMGDGDWMVVEADESDGTFLKLPADIAVVTNIDPEHLDHYGNFDAVRAAFRQFVENVPFYGFGVMCLDHPEVQALVSRIEDRRIITYGSNPQAEVRFVNQRMDGAASLFDVVIRSRKGEATEIKDLRLPMPGLHNVSNATAAIAVAHELGISSDDIRRGLGSFGGVKRRFTHTGSWNGVEIFDDYGHHPVEIRAVLKAAREATSQAGGRVVAIVQPHRYTRLASLFDEFAACFNDADTVIVAPVYTAGEEPIEGVNSEELVSRIKTAGHRDARYATGPEALAPLVASIAQAGDFVVCLGAGNVTQWAYALPKELAEQGKK.

114–120 contacts ATP; the sequence is GTHGKTT.

Belongs to the MurCDEF family.

Its subcellular location is the cytoplasm. It carries out the reaction UDP-N-acetyl-alpha-D-muramate + L-alanine + ATP = UDP-N-acetyl-alpha-D-muramoyl-L-alanine + ADP + phosphate + H(+). It functions in the pathway cell wall biogenesis; peptidoglycan biosynthesis. Cell wall formation. The chain is UDP-N-acetylmuramate--L-alanine ligase from Brucella abortus (strain S19).